Reading from the N-terminus, the 308-residue chain is Acetylglutamate kinase (308 aa).

Substrate-binding positions include 64 to 65 (GG), Arg86, and Asn192.

It belongs to the acetylglutamate kinase family. ArgB subfamily.

The protein resides in the cytoplasm. The catalysed reaction is N-acetyl-L-glutamate + ATP = N-acetyl-L-glutamyl 5-phosphate + ADP. It functions in the pathway amino-acid biosynthesis; L-arginine biosynthesis; N(2)-acetyl-L-ornithine from L-glutamate: step 2/4. In terms of biological role, catalyzes the ATP-dependent phosphorylation of N-acetyl-L-glutamate. The protein is Acetylglutamate kinase of Myxococcus xanthus (strain DK1622).